The following is a 398-amino-acid chain: tRNA(Ile)-lysidine synthase (398 aa).

25-30 (SGGVDS) is an ATP binding site.

The protein belongs to the tRNA(Ile)-lysidine synthase family.

Its subcellular location is the cytoplasm. It catalyses the reaction cytidine(34) in tRNA(Ile2) + L-lysine + ATP = lysidine(34) in tRNA(Ile2) + AMP + diphosphate + H(+). Functionally, ligates lysine onto the cytidine present at position 34 of the AUA codon-specific tRNA(Ile) that contains the anticodon CAU, in an ATP-dependent manner. Cytidine is converted to lysidine, thus changing the amino acid specificity of the tRNA from methionine to isoleucine. The protein is tRNA(Ile)-lysidine synthase of Francisella tularensis subsp. holarctica (strain OSU18).